The primary structure comprises 361 residues: Replication factor C subunit 3 (361 aa).

The span at 1 to 28 (MAGATAATPMDIDAAAPPPGAAAKGKAP) shows a compositional bias: low complexity. The segment at 1–39 (MAGATAATPMDIDAAAPPPGAAAKGKAPLSSTPGGRAAP) is disordered. Residue 77–84 (YGPPGTGK) coordinates ATP.

The protein belongs to the activator 1 small subunits family. Heterotetramer of subunits RFC2, RFC3, RFC4 and RFC5 that can form a complex with RFC1. Expressed in roots, leaves, shoot apical meristem (SAM), flag leaves and panicles.

It localises to the nucleus. Functionally, may be involved in DNA replication and thus regulate cell proliferation. The protein is Replication factor C subunit 3 (RFC3) of Oryza sativa subsp. japonica (Rice).